The following is a 1044-amino-acid chain: Outer dynein arm-docking complex subunit 2 (1044 aa).

2 stretches are compositionally biased toward basic and acidic residues: residues 317–338 and 379–401; these read IKFS…EVAI and SKDR…EKSR. Disordered stretches follow at residues 317–409 and 423–446; these read IKFS…PGRA and ISDS…ANAD. HEAT repeat units lie at residues 448-485, 487-527, 530-568, 627-665, and 668-706; these read PSEY…AQET, QLAI…NPQI, NIVD…FRRA, AIRK…EENY, and AIKA…DEET. ARM repeat units lie at residues 484–523, 525–564, 535–577, 622–661, 663–702, 746–785, 828–867, 871–910, 912–951, 953–992, and 1004–1031; these read ETCQ…EISH, PQIR…NVAK, GGLP…RHGG, YANK…ECAS, ENYR…QCAE, KENV…ECCQ, PESM…PCIQ, DAGE…NIAK, QENL…RCCM, GRNR…QLSE, and GAVK…ISNI. HEAT repeat units lie at residues 831 to 870, 874 to 914, 916 to 955, 958 to 996, and 999 to 1037; these read MMII…QNAK, EMVR…DQEN, AVIT…WGRN, AFGE…DADN, and TMHE…LALA.

Component of the outer dynein arm-docking complex along with ODAD1, ODAD3, ODAD4 and CLXN. Interacts with CFAP61. As to expression, expressed in trachea multiciliated cells.

The protein resides in the cytoplasm. Its subcellular location is the cytoskeleton. It is found in the cilium axoneme. It localises to the cilium basal body. Component of the outer dynein arm-docking complex (ODA-DC) that mediates outer dynein arms (ODA) binding onto the doublet microtubule. Involved in mediating assembly of both ODAs and their axonemal docking complex onto ciliary microtubules. The chain is Outer dynein arm-docking complex subunit 2 (ODAD2) from Bos taurus (Bovine).